The following is a 669-amino-acid chain: DNA ligase (669 aa).

NAD(+) contacts are provided by residues 33-37 (DAEYD), 82-83 (SL), and glutamate 114. Lysine 116 (N6-AMP-lysine intermediate) is an active-site residue. NAD(+) contacts are provided by arginine 137, glutamate 174, lysine 291, and lysine 315. Positions 409, 412, 427, and 433 each coordinate Zn(2+). A BRCT domain is found at 593–669 (EIPQPLAGKV…QTEQDLLALL (77 aa)).

It belongs to the NAD-dependent DNA ligase family. LigA subfamily. It depends on Mg(2+) as a cofactor. Mn(2+) is required as a cofactor.

It catalyses the reaction NAD(+) + (deoxyribonucleotide)n-3'-hydroxyl + 5'-phospho-(deoxyribonucleotide)m = (deoxyribonucleotide)n+m + AMP + beta-nicotinamide D-nucleotide.. In terms of biological role, DNA ligase that catalyzes the formation of phosphodiester linkages between 5'-phosphoryl and 3'-hydroxyl groups in double-stranded DNA using NAD as a coenzyme and as the energy source for the reaction. It is essential for DNA replication and repair of damaged DNA. This chain is DNA ligase, found in Vibrio vulnificus (strain CMCP6).